Here is a 315-residue protein sequence, read N- to C-terminus: Methionyl-tRNA formyltransferase (315 aa).

109 to 112 (SLLP) provides a ligand contact to (6S)-5,6,7,8-tetrahydrofolate.

The protein belongs to the Fmt family.

The catalysed reaction is L-methionyl-tRNA(fMet) + (6R)-10-formyltetrahydrofolate = N-formyl-L-methionyl-tRNA(fMet) + (6S)-5,6,7,8-tetrahydrofolate + H(+). Functionally, attaches a formyl group to the free amino group of methionyl-tRNA(fMet). The formyl group appears to play a dual role in the initiator identity of N-formylmethionyl-tRNA by promoting its recognition by IF2 and preventing the misappropriation of this tRNA by the elongation apparatus. This is Methionyl-tRNA formyltransferase from Lachnospira eligens (strain ATCC 27750 / DSM 3376 / VPI C15-48 / C15-B4) (Eubacterium eligens).